Here is a 363-residue protein sequence, read N- to C-terminus: Fructose-bisphosphate aldolase 1 (363 aa).

Position 34 (aspartate 34) interacts with dihydroxyacetone phosphate. Positions 36 and 39 each coordinate D-glyceraldehyde 3-phosphate. Arginine 43 lines the beta-D-fructose 1,6-bisphosphate pocket. Lysine 107 contributes to the D-glyceraldehyde 3-phosphate binding site. Position 146 (lysine 146) interacts with dihydroxyacetone phosphate. Residue glutamate 189 participates in D-glyceraldehyde 3-phosphate binding. The active-site Proton acceptor is glutamate 189. Residues lysine 231, serine 273, and glycine 274 each contribute to the dihydroxyacetone phosphate site. The active-site Schiff-base intermediate with dihydroxyacetone phosphate is lysine 231. Beta-D-fructose 1,6-bisphosphate-binding positions include 273–275 (SGG) and serine 301. Residues glycine 303 and arginine 304 each contribute to the dihydroxyacetone phosphate site. Residue arginine 304 coordinates beta-D-fructose 1,6-bisphosphate.

It belongs to the class I fructose-bisphosphate aldolase family. Homotetramer. Component of a complex, at least composed of ald-1, microneme protein MIC2 and ACT1. Interacts with microneme protein MIC2 (via cytoplasmic tail). Interacts with ACT1 (F-actin).

It is found in the cytoplasm. The enzyme catalyses beta-D-fructose 1,6-bisphosphate = D-glyceraldehyde 3-phosphate + dihydroxyacetone phosphate. It participates in carbohydrate degradation; glycolysis; D-glyceraldehyde 3-phosphate and glycerone phosphate from D-glucose: step 4/4. Functionally, plays a key role in glycolysis by catalyzing the cleavage of fructose 1,6-bisphosphate into dihydroxyacetone phosphate and glyceraldehyde 3-phosphate. Forms a bridge between cell surface adhesins and the actin cytoskeleton. Required for parasite invasion of host cells. In Toxoplasma gondii, this protein is Fructose-bisphosphate aldolase 1.